The primary structure comprises 1323 residues: MATRVASVFSSLTDVGIKAALQDEAYKRIKSNLREAEIINPYSVDARGAEALEELAIITNPHSIRLHTHAAAKSIENQMLNIVGHALPKEPVTFLFLKRGKLRYLSRGRIKDIFQNQEIEPRDVARYEHKTIVQKSLLLNTRVAYISDTLHFLRPRYIIDLFSQNVFLDVLYATVVLPVEASFKHPSQNPAIYTINYNYGGFQYLPGNHGGGAYSHEFEDLDWLKYGKFIYRWVDYRTDPISGKRVGTPKELVVTCQLVESLGANHLFIFKRGDLKTPRVRTFAKDKSVTFPDLFYPEEENANFPVDAELATKLFLYVKTLKTVTSQDVHGKLRQLLRSDELTRFSPMQLTHMVNYFMVVAHLDSCNDYSMLLGSSVWTQLTAPIQSKLRKLTEFFKGKSSFGKFCAALKWKTATYSLEVVDYVETRRDSFEPHPLDSLPDADDRDVNYDTDVSEDEADEKPAPKAPTSTPVPDTTPPASPAAPADAEYTQCWAAWDTVIRKHGFKGNQAQFDDDGNLITPIAEIKSLPKDSPRCAPELIKSLQEIARTPTLVEIDSKRSNAFGSDVKNGRIGMILKKQPNDWRLSFAAKCEHTSRKVHACVIHGAGGSGKSQRLQDWMRSLKKNSRECTVILPTAELRTDWVNKVPKQSLDTFKTWEKGLVQPPNRVVILDDYGKLPAGYPEALCANYPNIELLILTGDSRQSVHNEHNKQAATASLESNIEFWTQYCRFYVNATHRNVKRLANALGVYGERDEPLKVTCSSHVYDGWPVLAPGLLKAGNLAECGRRAFTYAGCQGLTAPRVQILLDNDTPLCSQRVMYTALSRAVNEIHFVNTGPSGDDFWTKLDCTPFLKTFLELSREIEIPEAKCQETAPAEATVKTHFPVENPNLVLEPYVEKMAEKFDRELYSKEYGYSNAIQTEDPVIQLFPHQQAKDDTLMWATIDQRLAITTKSENETEFALKKDIGDLLFINYHRAMKLPKNPIPFDKDLWQSCKNEVQKTYLSKDVGSIVNGVARQDPDFPINEIKLFLKSQWVKKVEKLGMVVKPGQTIASFAQAPVMLYGTMARYMRRMREVYQPSNIFINCEKTPADLDEWAKANWNFEGLAHSNDFTAFDQSQDGAMLQFEVIKAKFHNIPSDIINSYVELKTNAKVFLGVLKIMRLSGEGPTFDANTECSIAYHHTKYWVEPDVAQVYAGDDSAQDRTPVPRPSFNKIKDRLGLVSKPLTHRQVPGDFATFCGWIITPKGVIKDPLKLYASLQLAIRRGKSHEVALSYAHDAGLAYRLGDDLHSVLTFDEAHAHQCTVRDLVKLNKVEVLRPIWALD.

Positions 60 to 224 constitute an Alphavirus-like MT domain; sequence NPHSIRLHTH…SHEFEDLDWL (165 aa). The interval 432–486 is disordered; sequence EPHPLDSLPDADDRDVNYDTDVSEDEADEKPAPKAPTSTPVPDTTPPASPAAPAD. In terms of domain architecture, (+)RNA virus helicase ATP-binding spans 572–733; it reads IGMILKKQPN…FWTQYCRFYV (162 aa). Position 605-612 (605-612) interacts with ATP; sequence GAGGSGKS. Positions 734-867 constitute a (+)RNA virus helicase C-terminal domain; that stretch reads NATHRNVKRL…LSREIEIPEA (134 aa). A RdRp catalytic domain is found at 1104 to 1211; sequence GLAHSNDFTA…DRTPVPRPSF (108 aa).

It belongs to the potexvirus/carlavirus RNA replication protein family.

The enzyme catalyses RNA(n) + a ribonucleoside 5'-triphosphate = RNA(n+1) + diphosphate. It carries out the reaction ATP + H2O = ADP + phosphate + H(+). In terms of biological role, RNA replication. The central part of this protein possibly functions as an ATP-binding helicase. The sequence is that of RNA replication protein from Strawberry mild yellow edge-associated virus (SMYEaV).